The following is a 404-amino-acid chain: Cysteine desulfurase IscS (404 aa).

Pyridoxal 5'-phosphate is bound by residues 75–76 (AT), N155, Q183, and 203–205 (SGH). The residue at position 206 (K206) is an N6-(pyridoxal phosphate)lysine. T243 is a pyridoxal 5'-phosphate binding site. The active-site Cysteine persulfide intermediate is C328. C328 is a [2Fe-2S] cluster binding site.

It belongs to the class-V pyridoxal-phosphate-dependent aminotransferase family. NifS/IscS subfamily. Homodimer. Forms a heterotetramer with IscU, interacts with other sulfur acceptors. Pyridoxal 5'-phosphate is required as a cofactor.

The protein resides in the cytoplasm. The catalysed reaction is (sulfur carrier)-H + L-cysteine = (sulfur carrier)-SH + L-alanine. Its pathway is cofactor biosynthesis; iron-sulfur cluster biosynthesis. Functionally, master enzyme that delivers sulfur to a number of partners involved in Fe-S cluster assembly, tRNA modification or cofactor biosynthesis. Catalyzes the removal of elemental sulfur atoms from cysteine to produce alanine. Functions as a sulfur delivery protein for Fe-S cluster synthesis onto IscU, an Fe-S scaffold assembly protein, as well as other S acceptor proteins. The polypeptide is Cysteine desulfurase IscS (Shewanella pealeana (strain ATCC 700345 / ANG-SQ1)).